The sequence spans 173 residues: Pathogenesis-related protein 1C (173 aa).

Residues 1–20 (MSTSAVLFLLLAVFAAGASA) form the signal peptide.

Belongs to the thaumatin family.

This Hordeum vulgare (Barley) protein is Pathogenesis-related protein 1C.